The chain runs to 20 residues: Short cationic peptide-4a (20 aa).

The residue at position 20 (Glu-20) is a Glutamic acid 1-amide.

As to expression, expressed by the venom gland.

The protein resides in the secreted. This Cupiennius salei (American wandering spider) protein is Short cationic peptide-4a.